Reading from the N-terminus, the 439-residue chain is D-inositol 3-phosphate glycosyltransferase (439 aa).

His-21 contacts 1D-myo-inositol 3-phosphate. Residues 27 to 28 (QP) and Gly-35 each bind UDP-N-acetyl-alpha-D-glucosamine. 1D-myo-inositol 3-phosphate-binding positions include 32-37 (DAGGMN), Lys-90, Tyr-123, Thr-147, and Arg-167. UDP-N-acetyl-alpha-D-glucosamine is bound by residues Arg-241, Lys-246, and Gln-299. The Mg(2+) site is built by Tyr-308, Arg-309, and Ala-311. UDP-N-acetyl-alpha-D-glucosamine is bound by residues Glu-321 and Glu-329. Position 335 (Thr-335) interacts with Mg(2+).

This sequence belongs to the glycosyltransferase group 1 family. MshA subfamily. As to quaternary structure, homodimer.

The catalysed reaction is 1D-myo-inositol 3-phosphate + UDP-N-acetyl-alpha-D-glucosamine = 1D-myo-inositol 2-acetamido-2-deoxy-alpha-D-glucopyranoside 3-phosphate + UDP + H(+). Catalyzes the transfer of a N-acetyl-glucosamine moiety to 1D-myo-inositol 3-phosphate to produce 1D-myo-inositol 2-acetamido-2-deoxy-glucopyranoside 3-phosphate in the mycothiol biosynthesis pathway. The protein is D-inositol 3-phosphate glycosyltransferase of Mycobacterium sp. (strain JLS).